The chain runs to 98 residues: NADH-ubiquinone oxidoreductase chain 4L (98 aa).

3 consecutive transmembrane segments (helical) span residues M1–T21, V27–I47, and I61–I81.

Belongs to the complex I subunit 4L family. In terms of assembly, core subunit of respiratory chain NADH dehydrogenase (Complex I) which is composed of 45 different subunits.

Its subcellular location is the mitochondrion inner membrane. The catalysed reaction is a ubiquinone + NADH + 5 H(+)(in) = a ubiquinol + NAD(+) + 4 H(+)(out). Functionally, core subunit of the mitochondrial membrane respiratory chain NADH dehydrogenase (Complex I) which catalyzes electron transfer from NADH through the respiratory chain, using ubiquinone as an electron acceptor. Part of the enzyme membrane arm which is embedded in the lipid bilayer and involved in proton translocation. This is NADH-ubiquinone oxidoreductase chain 4L (MT-ND4L) from Macaca mulatta (Rhesus macaque).